Here is a 160-residue protein sequence, read N- to C-terminus: 2-C-methyl-D-erythritol 2,4-cyclodiphosphate synthase (160 aa).

A divalent metal cation is bound by residues aspartate 10 and histidine 12. 4-CDP-2-C-methyl-D-erythritol 2-phosphate contacts are provided by residues 10–12 (DVH) and 36–37 (HS). Position 44 (histidine 44) interacts with a divalent metal cation. 4-CDP-2-C-methyl-D-erythritol 2-phosphate-binding positions include 58–60 (DIG), 63–67 (FPDTD), and arginine 144.

It belongs to the IspF family. In terms of assembly, homotrimer. A divalent metal cation is required as a cofactor.

It carries out the reaction 4-CDP-2-C-methyl-D-erythritol 2-phosphate = 2-C-methyl-D-erythritol 2,4-cyclic diphosphate + CMP. It functions in the pathway isoprenoid biosynthesis; isopentenyl diphosphate biosynthesis via DXP pathway; isopentenyl diphosphate from 1-deoxy-D-xylulose 5-phosphate: step 4/6. Involved in the biosynthesis of isopentenyl diphosphate (IPP) and dimethylallyl diphosphate (DMAPP), two major building blocks of isoprenoid compounds. Catalyzes the conversion of 4-diphosphocytidyl-2-C-methyl-D-erythritol 2-phosphate (CDP-ME2P) to 2-C-methyl-D-erythritol 2,4-cyclodiphosphate (ME-CPP) with a corresponding release of cytidine 5-monophosphate (CMP). The polypeptide is 2-C-methyl-D-erythritol 2,4-cyclodiphosphate synthase (Dechloromonas aromatica (strain RCB)).